The primary structure comprises 193 residues: Proteasome subunit beta 1 (193 aa).

The propeptide at 1-4 (MPGA) is removed in mature form; by autocatalysis. T5 serves as the catalytic Nucleophile.

It belongs to the peptidase T1B family. As to quaternary structure, the 20S proteasome core is composed of 14 alpha and 14 beta subunits that assemble into four stacked heptameric rings, resulting in a barrel-shaped structure. The two inner rings, each composed of seven catalytic beta subunits, are sandwiched by two outer rings, each composed of seven alpha subunits. The catalytic chamber with the active sites is on the inside of the barrel. Has a gated structure, the ends of the cylinder being occluded by the N-termini of the alpha-subunits. Is capped at one or both ends by the proteasome regulatory ATPase, PAN.

It localises to the cytoplasm. The enzyme catalyses Cleavage of peptide bonds with very broad specificity.. The formation of the proteasomal ATPase PAN-20S proteasome complex, via the docking of the C-termini of PAN into the intersubunit pockets in the alpha-rings, triggers opening of the gate for substrate entry. Interconversion between the open-gate and close-gate conformations leads to a dynamic regulation of the 20S proteasome proteolysis activity. Its function is as follows. Component of the proteasome core, a large protease complex with broad specificity involved in protein degradation. This is Proteasome subunit beta 1 from Cenarchaeum symbiosum (strain A).